The following is a 113-amino-acid chain: Hydrogenase maturation factor HypA (113 aa).

H2 lines the Ni(2+) pocket. Residues C70, C73, C86, and C88 each coordinate Zn(2+).

This sequence belongs to the HypA/HybF family.

Its function is as follows. Involved in the maturation of [NiFe] hydrogenases. Required for nickel insertion into the metal center of the hydrogenase. The chain is Hydrogenase maturation factor HypA from Trichormus variabilis (strain ATCC 29413 / PCC 7937) (Anabaena variabilis).